The chain runs to 291 residues: Bifunctional protein FolD (291 aa).

Residues 166-168 and Ile232 contribute to the NADP(+) site; that span reads GAS.

It belongs to the tetrahydrofolate dehydrogenase/cyclohydrolase family. As to quaternary structure, homodimer.

The enzyme catalyses (6R)-5,10-methylene-5,6,7,8-tetrahydrofolate + NADP(+) = (6R)-5,10-methenyltetrahydrofolate + NADPH. The catalysed reaction is (6R)-5,10-methenyltetrahydrofolate + H2O = (6R)-10-formyltetrahydrofolate + H(+). It functions in the pathway one-carbon metabolism; tetrahydrofolate interconversion. Functionally, catalyzes the oxidation of 5,10-methylenetetrahydrofolate to 5,10-methenyltetrahydrofolate and then the hydrolysis of 5,10-methenyltetrahydrofolate to 10-formyltetrahydrofolate. This chain is Bifunctional protein FolD, found in Photorhabdus laumondii subsp. laumondii (strain DSM 15139 / CIP 105565 / TT01) (Photorhabdus luminescens subsp. laumondii).